Reading from the N-terminus, the 101-residue chain is Feather keratin Cos2-3 (101 aa).

Ser2 is subject to N-acetylserine.

Belongs to the avian keratin family. The avian keratins (F-ker, S-ker, C-ker and B-ker) are a complex mixture of very similar polypeptides.

The protein is Feather keratin Cos2-3 of Columba livia (Rock dove).